The primary structure comprises 505 residues: 2,3-bisphosphoglycerate-independent phosphoglycerate mutase (505 aa).

Positions 12 and 62 each coordinate Mn(2+). Ser-62 acts as the Phosphoserine intermediate in catalysis. Substrate contacts are provided by residues His-123, Arg-153–Asp-154, Arg-185, Arg-191, Arg-257–Arg-260, and Lys-330. Residues Asp-397, His-401, Asp-438, His-439, and His-456 each coordinate Mn(2+).

It belongs to the BPG-independent phosphoglycerate mutase family. In terms of assembly, monomer. Requires Mn(2+) as cofactor.

It carries out the reaction (2R)-2-phosphoglycerate = (2R)-3-phosphoglycerate. Its pathway is carbohydrate degradation; glycolysis; pyruvate from D-glyceraldehyde 3-phosphate: step 3/5. Its function is as follows. Catalyzes the interconversion of 2-phosphoglycerate and 3-phosphoglycerate. In Staphylococcus aureus (strain Mu50 / ATCC 700699), this protein is 2,3-bisphosphoglycerate-independent phosphoglycerate mutase.